We begin with the raw amino-acid sequence, 33 residues long: Photosystem II reaction center protein Psb30 (33 aa).

A helical membrane pass occupies residues 5–25 (IVFQLTSLVLILAAGPLVVVL).

The protein belongs to the Psb30/Ycf12 family. As to quaternary structure, PSII is composed of 1 copy each of membrane proteins PsbA, PsbB, PsbC, PsbD, PsbE, PsbF, PsbH, PsbI, PsbJ, PsbK, PsbL, PsbM, PsbT, PsbX, PsbY, PsbZ, Psb30/Ycf12, peripheral proteins of the oxygen-evolving complex and a large number of cofactors. It forms dimeric complexes.

It localises to the plastid. Its subcellular location is the chloroplast thylakoid membrane. A core subunit of photosystem II (PSII), probably helps stabilize the reaction center. The sequence is that of Photosystem II reaction center protein Psb30 from Tetradesmus obliquus (Green alga).